Here is a 216-residue protein sequence, read N- to C-terminus: Cytidylate kinase (216 aa).

7-15 (GPSGTGKST) is a binding site for ATP.

Belongs to the cytidylate kinase family. Type 1 subfamily.

The protein resides in the cytoplasm. It carries out the reaction CMP + ATP = CDP + ADP. The catalysed reaction is dCMP + ATP = dCDP + ADP. The protein is Cytidylate kinase of Chlamydia pneumoniae (Chlamydophila pneumoniae).